A 780-amino-acid chain; its full sequence is Protein phosphatase 1 regulatory subunit 21 (780 aa).

Coiled coils occupy residues 1-207 and 556-607; these read MASA…LKTL and ESRE…LKNT. Residues 84–104 form a disordered region; sequence EPRGKKNKKSGESSSQLSQEQ. Residues 95 to 104 show a composition bias toward low complexity; the sequence is ESSSQLSQEQ. T652 is subject to Phosphothreonine. Residues 693-742 adopt a coiled-coil conformation; that stretch reads YAECRALSKRLALAEKSKEALTEEMKLASQNISRLQDELTTTKRSYEDQL. The disordered stretch occupies residues 760–780; that stretch reads REEIDTLKMSSKGNSKKNKSR.

In terms of assembly, component of the FERRY complex, composed of five subunits: TBCK, PPP1R21, FERRY3, CRYZL1 and GATAD1, with a ratio of 1:2:1:2:4 respectively. PPP1R21 serves as a binding hub connecting all five complex subunits to mediate the binding to specific mitochondrial mRNAs. Interacts with the GTP-bound form of RAB5A (via its C-terminal region); linking the mRNP complex onto trafficking endosomes for active mRNA transport. Interacts with PPP1CA.

It is found in the early endosome. In terms of biological role, component of the FERRY complex (Five-subunit Endosomal Rab5 and RNA/ribosome intermediary). The FERRY complex directly interacts with mRNAs and RAB5A, and functions as a RAB5A effector involved in the localization and the distribution of specific mRNAs most likely by mediating their endosomal transport. The complex recruits mRNAs and ribosomes to early endosomes through direct mRNA-interaction. In the complex, PPP1R21 serves as a binding hub connecting all five complex subunits and mediating the binding to mRNA and early endosomes via RAB5A. Putative regulator of protein phosphatase 1 (PP1) activity. May play a role in the endosomal sorting process or in endosome maturation pathway. This is Protein phosphatase 1 regulatory subunit 21 (PPP1R21) from Homo sapiens (Human).